A 474-amino-acid chain; its full sequence is ATP synthase subunit beta (474 aa).

Residue 151-158 (GGAGVGKT) coordinates ATP.

It belongs to the ATPase alpha/beta chains family. As to quaternary structure, F-type ATPases have 2 components, CF(1) - the catalytic core - and CF(0) - the membrane proton channel. CF(1) has five subunits: alpha(3), beta(3), gamma(1), delta(1), epsilon(1). CF(0) has four main subunits: a(1), b(1), b'(1) and c(9-12).

The protein localises to the cell inner membrane. It catalyses the reaction ATP + H2O + 4 H(+)(in) = ADP + phosphate + 5 H(+)(out). Produces ATP from ADP in the presence of a proton gradient across the membrane. The catalytic sites are hosted primarily by the beta subunits. In Jannaschia sp. (strain CCS1), this protein is ATP synthase subunit beta.